The following is a 509-amino-acid chain: Otolin-1 (509 aa).

The N-terminal stretch at 1–25 (MPSLRLLAILTTLLAVVLMATQSSA) is a signal peptide. The segment at 23-96 (SSATRTTRRP…AYSLSPTDST (74 aa)) is disordered. Gly residues predominate over residues 42–54 (RGGGTGGGGGGGD). Positions 62-75 (RQTTTTMSPSSSLG) are enriched in polar residues. Asn121 carries an N-linked (GlcNAc...) asparagine glycan. In terms of domain architecture, Collagen-like 1 spans 193 to 244 (GDKGDQGDTGMPGAPGILGKEGQKGDLGPKGEKGETGLPGLKGDLGERGKPG). Residues 202 to 372 (GMPGAPGILG…GPKGPQGETA (171 aa)) are disordered. The segment covering 213 to 227 (EGQKGDLGPKGEKGE) has biased composition (basic and acidic residues). Asn246 and Asn311 each carry an N-linked (GlcNAc...) asparagine glycan. In terms of domain architecture, Collagen-like 2 spans 285–329 (GEKGEKGEAGLPGPPGPRGSVGPPGVNGSNGLPGPVGLRGQLGSP). Residues 302-322 (RGSVGPPGVNGSNGLPGPVGL) are compositionally biased toward low complexity. Over residues 327–342 (GSPGGKGEAGGRGPPG) the composition is skewed to gly residues. The C1q domain occupies 372–509 (AEQIRSAFSV…GFLLYADPKA (138 aa)). A glycan (N-linked (GlcNAc...) asparagine) is linked at Asn417.

The protein belongs to the OTOL1 family. In terms of assembly, homooligomer; disulfide-linked; probably forms homotrimers. Interacts with otomp.

The protein localises to the secreted. It localises to the extracellular space. The protein resides in the extracellular matrix. Functionally, collagen-like protein, which provides an organic scaffold for otoliths onto the sensory epithelium of the inner ear. Acts as a scaffold for biomineralization by sequestering calcium. The polypeptide is Otolin-1 (Otol1) (Oncorhynchus mykiss (Rainbow trout)).